The following is a 994-amino-acid chain: Transposase for transposon Tn2501 (994 aa).

This sequence belongs to the transposase 7 family.

Functionally, required for transposition of transposon Tn2501. The protein is Transposase for transposon Tn2501 (tnpA) of Escherichia coli.